A 155-amino-acid chain; its full sequence is Phospholipase A2 A2-actitoxin-Ucs2a (155 aa).

Residues 1–19 (MKNNIILVILLGISVFVDC) form the signal peptide. Positions 20-42 (LPLNDQEEDKSLNAQESEVSAVQ) are excised as a propeptide. Intrachain disulfides connect Cys55–Cys118, Cys71–Cys87, Cys86–Cys143, Cys93–Cys136, Cys100–Cys129, and Cys122–Cys134. Gly72 and Gly74 together coordinate Ca(2+). The active site involves His90. Asp91 contacts Ca(2+). Asp137 is a catalytic residue.

This sequence belongs to the phospholipase A2 family. The cofactor is Ca(2+).

Its subcellular location is the secreted. The protein localises to the nematocyst. The enzyme catalyses a 1,2-diacyl-sn-glycero-3-phosphocholine + H2O = a 1-acyl-sn-glycero-3-phosphocholine + a fatty acid + H(+). In terms of biological role, PLA2 catalyzes the calcium-dependent hydrolysis of the 2-acyl groups in 3-sn-phosphoglycerides. The sequence is that of Phospholipase A2 A2-actitoxin-Ucs2a from Urticina crassicornis (Mottled anemone).